Here is a 165-residue protein sequence, read N- to C-terminus: Photosystem I assembly protein Ycf3 (165 aa).

TPR repeat units follow at residues 32–65 (AFTY…EIDP), 69–102 (SYIL…NPFL), and 117–150 (GEQA…TPGN).

It belongs to the Ycf3 family.

The protein localises to the plastid. Its subcellular location is the chloroplast thylakoid membrane. Functionally, essential for the assembly of the photosystem I (PSI) complex. May act as a chaperone-like factor to guide the assembly of the PSI subunits. The protein is Photosystem I assembly protein Ycf3 of Spinacia oleracea (Spinach).